The primary structure comprises 198 residues: Small ribosomal subunit protein uS4 (198 aa).

An S4 RNA-binding domain is found at 91-154; the sequence is SRLDNVVYRL…KNLNIVQEAL (64 aa).

This sequence belongs to the universal ribosomal protein uS4 family. In terms of assembly, part of the 30S ribosomal subunit. Contacts protein S5. The interaction surface between S4 and S5 is involved in control of translational fidelity.

Functionally, one of the primary rRNA binding proteins, it binds directly to 16S rRNA where it nucleates assembly of the body of the 30S subunit. In terms of biological role, with S5 and S12 plays an important role in translational accuracy. This is Small ribosomal subunit protein uS4 from Aster yellows witches'-broom phytoplasma (strain AYWB).